The primary structure comprises 625 residues: MSPSGSTKGESSGLNQHYEEKVRPCIDLVDSLRALGVEKDLNLPAIAVIGDQSSGKSSVLEALSGVALPRGTGIVTRCPLVLKLKKITKDKSWHGLLTYNDKIRELKDPAKIEKAVLNAQTALAGIGEGISHEMITLEIQSCDVPDLTLIDLPGIARVATGNQPEDIEKQIKSLIEKFIKRQETISLVVVPANIDIATTEALKMASTVDPTGQRTLGILTKPDLVDRGMEDTVVRTVNNEVIPLKKGYMIVKCRGQQDINDKLGLVEALEKERRFFDENVHFRSLLEDRKATIPLLAERLTKELVEHIAKNLPQLQNQLEMKLEKTSADLRGLGDGVPLDKNEKSNFLIMKIRQFNDVLERVQMAEEDVEKPNTRVFSKIRSEFVKWKRILDSKAIKTEETLRDEVQEYVKTRRGKELPGFVNYRTFENIVKKHIAELHEPALKLLKDVTDIVHSSVDHIVNAHFSSFSPLMRAAKDPTEDFLHEQFQRAEEKIHSQFRMEKIVYSQDDLYSDQLTTAKNTLRGYGLQSPNVSADVREMAYHLTSYLTIACERLANQIPLIVQYHMLNQYISQLQNAMLGLIGKNSPGMLLCEDSGVARKRKDLKERLERLKSAGRVLSKFVHSA.

In terms of domain architecture, Dynamin-type G spans 40–313 (DLNLPAIAVI…LVEHIAKNLP (274 aa)). The tract at residues 50 to 57 (GDQSSGKS) is G1 motif. 50 to 57 (GDQSSGKS) provides a ligand contact to GTP. The G2 motif stretch occupies residues 75–77 (VTR). A G3 motif region spans residues 151–154 (DLPG). Residues 151 to 155 (DLPGI) and 220 to 223 (TKPD) each bind GTP. Residues 220 to 223 (TKPD) are G4 motif. Positions 252–255 (KCRG) are G5 motif. A GED domain is found at 536 to 625 (VREMAYHLTS…RVLSKFVHSA (90 aa)).

The protein belongs to the TRAFAC class dynamin-like GTPase superfamily. Dynamin/Fzo/YdjA family.

It is found in the cytoplasm. In Danio rerio (Zebrafish), this protein is Interferon-induced GTP-binding protein MxE (mxe).